Consider the following 429-residue polypeptide: 26S proteasome regulatory subunit RPN7 (429 aa).

S8 and S77 each carry phosphoserine. The stretch at 131–164 (AQAWINLGEYYAQIGDKDNAEKTLGKSLSKAIST) is one TPR repeat. The 173-residue stretch at 223-395 (NFKEAAKLLV…GIVETNRPDN (173 aa)) folds into the PCI domain.

In terms of assembly, the 26S proteasome is composed of a core protease, known as the 20S proteasome, capped at one or both ends by the 19S regulatory complex (RC). The RC is composed of at least 18 different subunits in two subcomplexes, the base and the lid, which form the portions proximal and distal to the 20S proteolytic core, respectively. Component of the lid subcomplex of the 19S RC.

The protein resides in the nucleus. Component of the 19S cap proteasome complex which acts as a regulatory subunit of the 26S proteasome, involved in the ATP-dependent degradation of ubiquitinated proteins. This Saccharomyces cerevisiae (strain ATCC 204508 / S288c) (Baker's yeast) protein is 26S proteasome regulatory subunit RPN7.